Reading from the N-terminus, the 415-residue chain is L-cysteine:1D-myo-inositol 2-amino-2-deoxy-alpha-D-glucopyranoside ligase (415 aa).

Residue cysteine 43 coordinates Zn(2+). Residues 43 to 46 (CGIT), threonine 58, and 81 to 83 (NVT) each bind L-cysteinyl-5'-AMP. A 'HIGH' region motif is present at residues 45 to 55 (ITPYDATHLGH). The short motif at 187 to 192 (ERGGDP) is the 'ERGGDP' region element. Residue tryptophan 227 coordinates L-cysteinyl-5'-AMP. Cysteine 231 is a Zn(2+) binding site. 249–251 (GSD) is a binding site for L-cysteinyl-5'-AMP. Histidine 256 is a binding site for Zn(2+). Residue isoleucine 283 coordinates L-cysteinyl-5'-AMP. The short motif at 289–293 (KMSKS) is the 'KMSKS' region element.

Belongs to the class-I aminoacyl-tRNA synthetase family. MshC subfamily. Monomer. Requires Zn(2+) as cofactor.

It catalyses the reaction 1D-myo-inositol 2-amino-2-deoxy-alpha-D-glucopyranoside + L-cysteine + ATP = 1D-myo-inositol 2-(L-cysteinylamino)-2-deoxy-alpha-D-glucopyranoside + AMP + diphosphate + H(+). Catalyzes the ATP-dependent condensation of GlcN-Ins and L-cysteine to form L-Cys-GlcN-Ins. The sequence is that of L-cysteine:1D-myo-inositol 2-amino-2-deoxy-alpha-D-glucopyranoside ligase from Saccharomonospora viridis (strain ATCC 15386 / DSM 43017 / JCM 3036 / CCUG 5913 / NBRC 12207 / NCIMB 9602 / P101) (Thermoactinomyces viridis).